The primary structure comprises 159 residues: Ribosomal RNA large subunit methyltransferase H (159 aa).

S-adenosyl-L-methionine-binding positions include leucine 76, glycine 108, and 127–132; that span reads FSKMTF.

This sequence belongs to the RNA methyltransferase RlmH family. As to quaternary structure, homodimer.

It is found in the cytoplasm. It carries out the reaction pseudouridine(1915) in 23S rRNA + S-adenosyl-L-methionine = N(3)-methylpseudouridine(1915) in 23S rRNA + S-adenosyl-L-homocysteine + H(+). Its function is as follows. Specifically methylates the pseudouridine at position 1915 (m3Psi1915) in 23S rRNA. The chain is Ribosomal RNA large subunit methyltransferase H from Clostridium botulinum (strain Kyoto / Type A2).